Consider the following 383-residue polypeptide: S-adenosylmethionine synthase (383 aa).

H15 is an ATP binding site. D17 is a binding site for Mg(2+). E43 contacts K(+). L-methionine contacts are provided by E56 and Q99. A flexible loop region spans residues 99-109; sequence QSPDINQGVDR. ATP contacts are provided by residues 164-166, 230-231, D239, 245-246, A262, and K266; these read DAK, RF, and RK. Residue D239 coordinates L-methionine. K270 lines the L-methionine pocket.

Belongs to the AdoMet synthase family. Homotetramer; dimer of dimers. Mg(2+) serves as cofactor. It depends on K(+) as a cofactor.

It is found in the cytoplasm. The enzyme catalyses L-methionine + ATP + H2O = S-adenosyl-L-methionine + phosphate + diphosphate. Its pathway is amino-acid biosynthesis; S-adenosyl-L-methionine biosynthesis; S-adenosyl-L-methionine from L-methionine: step 1/1. Its function is as follows. Catalyzes the formation of S-adenosylmethionine (AdoMet) from methionine and ATP. The overall synthetic reaction is composed of two sequential steps, AdoMet formation and the subsequent tripolyphosphate hydrolysis which occurs prior to release of AdoMet from the enzyme. In Pectobacterium atrosepticum (strain SCRI 1043 / ATCC BAA-672) (Erwinia carotovora subsp. atroseptica), this protein is S-adenosylmethionine synthase.